The primary structure comprises 590 residues: Phosphatidylserine decarboxylase proenzyme 1, mitochondrial (590 aa).

The transit peptide at M1–F59 directs the protein to the mitochondrion. Residues S60–W140 lie on the Mitochondrial matrix side of the membrane. The chain crosses the membrane as a helical span at residues W141–Y159. Residues E160–V590 are Mitochondrial intermembrane-facing. Catalysis depends on charge relay system; for autoendoproteolytic cleavage activity residues D260, H403, and S558. The active-site Schiff-base intermediate with substrate; via pyruvic acid; for decarboxylase activity is the S558. Residue S558 is modified to Pyruvic acid (Ser); by autocatalysis.

This sequence belongs to the phosphatidylserine decarboxylase family. PSD-B subfamily. Eukaryotic type I sub-subfamily. Heterodimer of a large membrane-associated beta subunit and a small pyruvoyl-containing alpha subunit. The cofactor is pyruvate. In terms of processing, is synthesized initially as an inactive proenzyme. Formation of the active enzyme involves a self-maturation process in which the active site pyruvoyl group is generated from an internal serine residue via an autocatalytic post-translational modification. Two non-identical subunits are generated from the proenzyme in this reaction, and the pyruvate is formed at the N-terminus of the alpha chain, which is derived from the carboxyl end of the proenzyme. The autoendoproteolytic cleavage occurs by a canonical serine protease mechanism, in which the side chain hydroxyl group of the serine supplies its oxygen atom to form the C-terminus of the beta chain, while the remainder of the serine residue undergoes an oxidative deamination to produce ammonia and the pyruvoyl prosthetic group on the alpha chain. During this reaction, the Ser that is part of the protease active site of the proenzyme becomes the pyruvoyl prosthetic group, which constitutes an essential element of the active site of the mature decarboxylase.

It localises to the mitochondrion inner membrane. The catalysed reaction is a 1,2-diacyl-sn-glycero-3-phospho-L-serine + H(+) = a 1,2-diacyl-sn-glycero-3-phosphoethanolamine + CO2. It functions in the pathway phospholipid metabolism; phosphatidylethanolamine biosynthesis; phosphatidylethanolamine from CDP-diacylglycerol: step 2/2. Catalyzes the formation of phosphatidylethanolamine (PtdEtn) from phosphatidylserine (PtdSer). Plays a central role in phospholipid metabolism and in the interorganelle trafficking of phosphatidylserine. Important for virulence. This Candida albicans (strain SC5314 / ATCC MYA-2876) (Yeast) protein is Phosphatidylserine decarboxylase proenzyme 1, mitochondrial.